The primary structure comprises 171 residues: Lipoprotein signal peptidase (171 aa).

3 helical membrane passes run 12–32 (WYWVAVLVFFADQLSKQWVLA), 67–87 (WQRWLFTIVAVGFSTLLTVWL), and 93–113 (SLLKLNLAYTLVIGGALGNLV). Catalysis depends on residues aspartate 123 and aspartate 141. A helical membrane pass occupies residues 137-157 (FNIADSAICIGAVLIIWDAFL).

This sequence belongs to the peptidase A8 family.

Its subcellular location is the cell inner membrane. It catalyses the reaction Release of signal peptides from bacterial membrane prolipoproteins. Hydrolyzes -Xaa-Yaa-Zaa-|-(S,diacylglyceryl)Cys-, in which Xaa is hydrophobic (preferably Leu), and Yaa (Ala or Ser) and Zaa (Gly or Ala) have small, neutral side chains.. It functions in the pathway protein modification; lipoprotein biosynthesis (signal peptide cleavage). Its function is as follows. This protein specifically catalyzes the removal of signal peptides from prolipoproteins. This Shewanella baltica (strain OS195) protein is Lipoprotein signal peptidase.